We begin with the raw amino-acid sequence, 122 residues long: Large ribosomal subunit protein uL14 (122 aa).

This sequence belongs to the universal ribosomal protein uL14 family. As to quaternary structure, part of the 50S ribosomal subunit. Forms a cluster with proteins L3 and L19. In the 70S ribosome, L14 and L19 interact and together make contacts with the 16S rRNA in bridges B5 and B8.

Functionally, binds to 23S rRNA. Forms part of two intersubunit bridges in the 70S ribosome. The polypeptide is Large ribosomal subunit protein uL14 (Borreliella burgdorferi (strain ZS7) (Borrelia burgdorferi)).